Here is a 570-residue protein sequence, read N- to C-terminus: MANPKEKTPVCLVNELARFHSIQPQYKLLNESGPAHSKMFSVQLSLGEQTWESEGSSIKKAQQAVANKALTESTLPKPVQKPPKSNVNNNPGSITPTVELNGLAMKRGEPAIYRPLDPKPFPNYRANYNFRGMYNQRYHCPMPKIFYVQLTVGNNEFFGEGKTRQAARHNAAMKALQALQNEPIPEKSPQNGESGKEMDDDKDANKSEISLVFEIALKRNMPVSFEVIKESGPPHMKSFVTRVSVGEFSAEGEGNSKKLSKKRAATTVLQELKKLPPLPVVEKPKLFFKKRPKTIVKAGPDYGQGMNPISRLAQIQQARKEKEPDYILLSERGMPRRREFVMQVKVGNEVATGTGPNKKIAKKNAAEAMLLQLGYKASTSLQDPLDKTGENKGWSGPKPGFPEPTNNTPKGILHLSPDVYQEMEASRHRVTSGTTLSYLSPKDMNQPSSSFFSVSPSSTSSATVARELLMNGTSPTAEAIGLKGSSPTSPCSSVQPSKQLEYLARIQGFQAALSALKQFSEQGLESIDGAVNVEKGSLEKQAKHLREKADNNQAKPASISQDCKKSKSAI.

Residues 8-75 form the DRBM 1 domain; it reads TPVCLVNELA…ANKALTESTL (68 aa). Disordered stretches follow at residues 71–94 and 178–203; these read TEST…PGSI and ALQN…DDKD. Polar residues predominate over residues 83–94; that stretch reads PKSNVNNNPGSI. The 87-residue stretch at 95-181 folds into the DRBM 2 domain; it reads TPTVELNGLA…AMKALQALQN (87 aa). Ser-188 carries the post-translational modification Phosphoserine. The segment covering 194–203 has biased composition (basic and acidic residues); sequence SGKEMDDDKD. DRBM domains lie at 207–274 and 307–375; these read SEIS…ELKK and NPIS…QLGY. 2 consecutive short sequence motifs (nuclear localization signal) follow at residues 273 to 291 and 373 to 412; these read KKLP…FKKR and LGYK…PKGI. The interval 381–413 is disordered; that stretch reads LQDPLDKTGENKGWSGPKPGFPEPTNNTPKGIL. A required for dendritic transport region spans residues 381–570; the sequence is LQDPLDKTGE…QDCKKSKSAI (190 aa). Position 395 is a phosphoserine (Ser-395). Phosphothreonine is present on Thr-405. Ser-416, Ser-426, Ser-440, Ser-455, and Ser-492 each carry phosphoserine. The tract at residues 545 to 570 is disordered; sequence LREKADNNQAKPASISQDCKKSKSAI. Positions 551-561 are enriched in polar residues; sequence NNQAKPASISQ.

In terms of assembly, interacts with microtubules. Isoform 2 and isoform 3 may also interact with ribosomes, and this association is independent of translation. Identified in a mRNP complex, at least composed of DHX9, DDX3X, ELAVL1, HNRNPU, IGF2BP1, ILF3, PABPC1, PCBP2, PTBP2, STAU1, STAU2, SYNCRIP and YBX1. Interacts with the exportin XPO5. This requires RNA and RAN bound to GTP. Interacts with TRIM71 (via NHL repeats) in an RNA-dependent manner. In terms of tissue distribution, expressed in brain and neurons, where isoform 2 and isoform 3 appear to be the most abundant. Expressed at the neuromuscular junction of the extensor digitorum longus, tibialis anterior and soleus muscles. Expression at neuromuscular junctions is most pronounced in slow-twitch muscle. Also weakly expressed in heart, kidney, ovary and testis.

Its subcellular location is the cytoplasm. It is found in the nucleus. The protein resides in the nucleolus. The protein localises to the endoplasmic reticulum. In terms of biological role, RNA-binding protein required for the microtubule-dependent transport of neuronal RNA from the cell body to the dendrite. As protein synthesis occurs within the dendrite, the localization of specific mRNAs to dendrites may be a prerequisite for neurite outgrowth and plasticity at sites distant from the cell body. The protein is Double-stranded RNA-binding protein Staufen homolog 2 (Stau2) of Mus musculus (Mouse).